A 71-amino-acid polypeptide reads, in one-letter code: R-phycoerythrin gamma-1 chain, chloroplastic (71 aa).

The phycourobilin site is built by C25 and C34. C49 contributes to the (2R,3E)-phycoerythrobilin binding site. C58 contacts phycourobilin.

Heteromer of 6 alpha, 6 beta and 1 gamma chains. Contains four covalently linked bilin chromophores.

The protein localises to the plastid. It is found in the chloroplast thylakoid membrane. Functionally, critical for the incorporation of phycoerythrin in the phycobilisome complex. The polypeptide is R-phycoerythrin gamma-1 chain, chloroplastic (Gastroclonium coulteri (Red alga)).